Consider the following 21-residue polypeptide: Putative sperm adenylate cyclase (21 aa).

It catalyses the reaction ATP = 3',5'-cyclic AMP + diphosphate. The chain is Putative sperm adenylate cyclase from Mus musculus (Mouse).